A 237-amino-acid chain; its full sequence is Methylthioribulose-1-phosphate dehydratase (237 aa).

Cys98 serves as a coordination point for substrate. Residues His116 and His118 each coordinate Zn(2+). The active-site Proton donor/acceptor is the Glu140. Residue His196 coordinates Zn(2+).

The protein belongs to the aldolase class II family. MtnB subfamily. Requires Zn(2+) as cofactor.

The protein localises to the cytoplasm. The catalysed reaction is 5-(methylsulfanyl)-D-ribulose 1-phosphate = 5-methylsulfanyl-2,3-dioxopentyl phosphate + H2O. It functions in the pathway amino-acid biosynthesis; L-methionine biosynthesis via salvage pathway; L-methionine from S-methyl-5-thio-alpha-D-ribose 1-phosphate: step 2/6. Catalyzes the dehydration of methylthioribulose-1-phosphate (MTRu-1-P) into 2,3-diketo-5-methylthiopentyl-1-phosphate (DK-MTP-1-P). This chain is Methylthioribulose-1-phosphate dehydratase, found in Laccaria bicolor (strain S238N-H82 / ATCC MYA-4686) (Bicoloured deceiver).